The following is a 287-amino-acid chain: MRFLAYFGHLNIDVLISVDSIPREGSVNVKDLRPRFGGTAGNFAIVAQKFRIPFDLYSAVGMKTHREYLAMIESMGINTGHVEKFEDESGPICYIATDGKKQVSFMHQGAMEKWKPQLADEYEYVHFSTGPNYLDMAKSIRSKIIFDPSQEIHKYSKDELKKFHEISYMSIFNDHEYRVFREMTGLSSPKVTTIVTNGERGSSLFMDGKKYDFPAIPSSGDTVGAGDSFRAGLYLALYNRRSIEKGMIYGTIIAHHVIDDGIENFSLNMEDLERETENYRRMFTKRS.

Substrate-binding residues include aspartate 13, asparagine 28, glycine 38, and asparagine 42. Glutamine 102 provides a ligand contact to ATP. Substrate is bound by residues serine 104 and glutamine 150. Residues asparagine 173 and 196–201 (TNGERG) each bind ATP. Residue aspartate 227 participates in substrate binding. Catalysis depends on aspartate 227, which acts as the Proton acceptor.

This sequence belongs to the carbohydrate kinase PfkB family. In terms of assembly, homodimer. Requires Mg(2+) as cofactor. It depends on Co(2+) as a cofactor.

The catalysed reaction is adenosine + ATP = AMP + ADP + H(+). It catalyses the reaction cytidine + ATP = CMP + ADP + H(+). The enzyme catalyses guanosine + ATP = GMP + ADP + H(+). It carries out the reaction inosine + ATP = IMP + ADP + H(+). In terms of biological role, nucleoside kinase with broad substrate specificity. Catalyzes the phosphorylation of a variety of nucleosides to the corresponding nucleoside 5'-mono-phosphate in the presence of phosphate donors and divalent cations. Displays the most efficient activity with guanosine, followed by inosine, cytidine, and adenosine. Negligible enzymatic activity is detected with thymidine, uridine, and 2-deoxyadenosine. ATP is the most efficient phosphate donor, but can also use GTP and ITP. Shows no sugar kinase activity, since it is unable to phosphorylate ribose, fructose-1-phosphate, or fructose-6-phosphate. The polypeptide is Nucleoside kinase (Thermoplasma acidophilum (strain ATCC 25905 / DSM 1728 / JCM 9062 / NBRC 15155 / AMRC-C165)).